The sequence spans 291 residues: Phosphatidylglycerol--prolipoprotein diacylglyceryl transferase (291 aa).

7 helical membrane-spanning segments follow: residues 21 to 41 (VSLHWYGLMYLVGFVFAMWLA), 60 to 80 (LLYAGFLGVFLGGRIGYVLFY), 96 to 116 (WDGGMSFHGGLIGVICVMIWF), 130 to 150 (FIAPLIPFGLGAGRLGNFING), 198 to 218 (SQLYELFLEGIVLFIILNLFI), 225 to 245 (GAVSGLFLIGYGAFRIIVEFF), and 260 to 280 (ISMGQILSIPMIVAGAAMMIW). An a 1,2-diacyl-sn-glycero-3-phospho-(1'-sn-glycerol)-binding site is contributed by arginine 143.

Belongs to the Lgt family.

Its subcellular location is the cell inner membrane. The enzyme catalyses L-cysteinyl-[prolipoprotein] + a 1,2-diacyl-sn-glycero-3-phospho-(1'-sn-glycerol) = an S-1,2-diacyl-sn-glyceryl-L-cysteinyl-[prolipoprotein] + sn-glycerol 1-phosphate + H(+). Its pathway is protein modification; lipoprotein biosynthesis (diacylglyceryl transfer). Catalyzes the transfer of the diacylglyceryl group from phosphatidylglycerol to the sulfhydryl group of the N-terminal cysteine of a prolipoprotein, the first step in the formation of mature lipoproteins. In Cronobacter sakazakii (strain ATCC BAA-894) (Enterobacter sakazakii), this protein is Phosphatidylglycerol--prolipoprotein diacylglyceryl transferase.